Here is a 249-residue protein sequence, read N- to C-terminus: Capsid protein (249 aa).

The segment at 1-33 is disordered; the sequence is MDTDGDNDVFGSGNDTRNNDDKKKEEMKQNISD. The segment covering 17–28 has biased composition (basic and acidic residues); that stretch reads RNNDDKKKEEMK.

Belongs to the closteroviridae capsid protein family.

The protein localises to the virion. Functionally, capsid protein self-assembles to form filamentous capsids, about 650-850 nm in length. This Beta vulgaris (Sugar beet) protein is Capsid protein.